A 248-amino-acid polypeptide reads, in one-letter code: Clathrin light chain A (248 aa).

The interval 1-93 is disordered; that stretch reads MAELDPFGAP…YQESNGPTDS (93 aa). Positions 13-25 are enriched in gly residues; that stretch reads APGGPALGNGVAG. Positions 100–162 are involved in binding clathrin heavy chain; sequence VDRLQSEPES…QLQKTKASNR (63 aa). Phosphoserine is present on residues serine 105 and serine 206. Lysine 223 bears the N6-acetyllysine mark. Serine 236 is modified (phosphoserine). The residue at position 242 (lysine 242) is an N6-acetyllysine.

The protein belongs to the clathrin light chain family. As to quaternary structure, clathrin coats are formed from molecules containing 3 heavy chains and 3 light chains. Interacts with CALY; the interaction stimulates clathrin self-assembly and clathrin-mediated endocytosis. Interacts with CKAP5 and TACC3 forming the TACC3/ch-TOG/clathrin complex located at spindle inter-microtubules bridges; the complex implicates clathrin triskelions.

It is found in the cytoplasmic vesicle membrane. Its subcellular location is the membrane. The protein resides in the coated pit. It localises to the cytoplasm. The protein localises to the cytoskeleton. It is found in the spindle. Functionally, clathrin is the major protein of the polyhedral coat of coated pits and vesicles. Acts as a component of the TACC3/ch-TOG/clathrin complex proposed to contribute to stabilization of kinetochore fibers of the mitotic spindle by acting as inter-microtubule bridge. The sequence is that of Clathrin light chain A (Clta) from Rattus norvegicus (Rat).